We begin with the raw amino-acid sequence, 96 residues long: UPF0235 protein CKO_04329 (96 aa).

Belongs to the UPF0235 family.

In Citrobacter koseri (strain ATCC BAA-895 / CDC 4225-83 / SGSC4696), this protein is UPF0235 protein CKO_04329.